Reading from the N-terminus, the 229-residue chain is Small ribosomal subunit protein uS3 (229 aa).

Residues 39–107 enclose the KH type-2 domain; that stretch reads VRQYLTEKLK…TAQINIAEIR (69 aa).

This sequence belongs to the universal ribosomal protein uS3 family. In terms of assembly, part of the 30S ribosomal subunit. Forms a tight complex with proteins S10 and S14.

In terms of biological role, binds the lower part of the 30S subunit head. Binds mRNA in the 70S ribosome, positioning it for translation. The chain is Small ribosomal subunit protein uS3 from Shewanella denitrificans (strain OS217 / ATCC BAA-1090 / DSM 15013).